The following is a 303-amino-acid chain: Sulfotransferase 6B1 (303 aa).

65 to 70 (KCGSNW) is a 3'-phosphoadenylyl sulfate binding site. The active-site Proton acceptor is the His-118. Residues Arg-140, Ser-148, Tyr-203, 237–242 (STFQAM), and 259–261 (RKG) contribute to the 3'-phosphoadenylyl sulfate site.

It belongs to the sulfotransferase 1 family. In terms of tissue distribution, specifically expressed in kidney and testis.

It is found in the cytoplasm. The protein localises to the cytosol. It carries out the reaction thyroxine + 3'-phosphoadenylyl sulfate = thyroxine sulfate + adenosine 3',5'-bisphosphate + H(+). In terms of biological role, sulfotransferase that utilizes 3'-phospho-5'-adenylyl sulfate (PAPS) as sulfonate donor to catalyze the sulfate conjugation of thyroxine. Involved in the metabolism of thyroxine. The protein is Sulfotransferase 6B1 (SULT6B1) of Homo sapiens (Human).